The following is a 473-amino-acid chain: JmjC domain-containing protein 4 (473 aa).

Residues 140–433 (PTDGLLTDFS…DFDHPYLDRN (294 aa)) form the JmjC domain. The segment at 452 to 473 (TNKKNEKRPAEDDSPSQKKTCQ) is disordered.

Its subcellular location is the nucleus. Has a role in meiosis. The protein is JmjC domain-containing protein 4 (jmj4) of Schizosaccharomyces pombe (strain 972 / ATCC 24843) (Fission yeast).